Consider the following 350-residue polypeptide: Protein TRIGALACTOSYLDIACYLGLYCEROL 1, chloroplastic (350 aa).

The disordered stretch occupies residues 67 to 86 (SMSMLEEETSTENNAPSQEA). A helical transmembrane segment spans residues 98 to 117 (YIWRGLSVPIIAGQVVLRIL). Over 118–136 (KGKIHWRNTLQQLERTGPK) the chain is Stromal. The helical transmembrane segment at 137–157 (SLGVCLLTSTFVGMAFTIQFV) threads the bilayer. The Chloroplast intermembrane portion of the chain corresponds to 158 to 168 (REFTRLGLNRS). A helical membrane pass occupies residues 169–189 (IGGVLALAFSRELSPVITSIV). Residues 190-229 (VAGRMGSAFAAELGTMQVSEQTDTLRVLGADPIDYLITPR) are Stromal-facing. The chain crosses the membrane as a helical span at residues 230 to 250 (VIASCLALPFLTLMCFTVGMA). Topologically, residues 251–288 (SSALLSDAVYGISINIIMDSAHRALRPWDIVSAMIKSQ) are chloroplast intermembrane. The chain crosses the membrane as a helical span at residues 289-309 (VFGAIISVISCSWGVTTTGGA). Residues 310-318 (KGVGESTTS) are Stromal-facing. A helical membrane pass occupies residues 319-339 (AVVMSLVGIFIADFVLSSFFF). Residues 340-350 (QGAGDSLKNCV) lie on the Chloroplast intermembrane side of the membrane.

This sequence belongs to the MlaE permease family. In terms of assembly, permease subunit of the TGD complex, a lipid translocator at the inner chloroplast envelope membrane made of TGD1, TGD2 and TGD3. Interacts with TGD2 and TGD3 with an overall subunit stoichiometry of 2 TGD1, 2 TGD3 and 8 to 12 TGD2. Interacts with TGD5. In terms of tissue distribution, high levels in green tissues, but low levels in nongreen tissues such as roots.

The protein resides in the plastid. It localises to the chloroplast inner membrane. Its function is as follows. Required during embryogenesis. Permease involved in lipid transfer from the endoplasmic reticulum (ER) to plastids, and necessary for thylakoids formation. The polypeptide is Protein TRIGALACTOSYLDIACYLGLYCEROL 1, chloroplastic (Arabidopsis thaliana (Mouse-ear cress)).